A 66-amino-acid polypeptide reads, in one-letter code: MNVTAMFIVLLLTMPLTDGFNIRAINGGELFGLVQRDAGNALDHGFYRRGDCPPWCVGARCRAEKC.

Residues Met1–Gly19 form the signal peptide. The propeptide occupies Phe20–Arg49.

This sequence belongs to the conotoxin L superfamily. Contains 2 disulfide bonds. In terms of tissue distribution, expressed by the venom duct.

The protein localises to the secreted. In terms of biological role, probable neurotoxin with unknown target. Possibly targets ion channels. This peptide could be considered as an apoptosis activator in some cancers (tested on lung and breast cancer cell lines). Provokes the decrease of H1299 lung cancer cells viability after 24 hours treatment, and induces a high Bax/Bcl-2 ratio, which suggests that this peptide can activate apoptosis in H1299 cells. In addition, H1299 and H1437 lung cancer cell lines treated with this peptide have decreased cell viability, activated caspases, and reduced expression of the pro-survival protein NF-kappa-B (NFKB1), indicating activation of apoptosis. In synergy with MicroRNA-101-3p, this synthetic peptide inhibits breast cancer cells (SK-BR-3 and MCF-7) migration, invasion, and proliferation through suppressing the expression of the methyltransferase EZH2. In parallel, this synergy treatment is able to promote the apoptosis of breast cancer cells. Against microbes, this synthetic toxin (at micromolar concentrations) lowers viability and inhibits host cell invasion by the opportunistic parasite Toxoplasma gondii (tachyzoite form). In addition, it permits T.gondii intracellular replication to decrease while viability of the host cell is unaffected. The polypeptide is Conotoxin Cl14.1a (Californiconus californicus (California cone)).